The following is a 954-amino-acid chain: Valine--tRNA ligase (954 aa).

The short motif at 48-58 (PNVTGSLHMGH) is the 'HIGH' region element. The short motif at 560–564 (KMSKS) is the 'KMSKS' region element. Lys-563 is a binding site for ATP. Residues 883–953 (AGFINKEAEL…IQEQYKAIEA (71 aa)) are a coiled coil.

It belongs to the class-I aminoacyl-tRNA synthetase family. ValS type 1 subfamily. Monomer.

It localises to the cytoplasm. It catalyses the reaction tRNA(Val) + L-valine + ATP = L-valyl-tRNA(Val) + AMP + diphosphate. In terms of biological role, catalyzes the attachment of valine to tRNA(Val). As ValRS can inadvertently accommodate and process structurally similar amino acids such as threonine, to avoid such errors, it has a 'posttransfer' editing activity that hydrolyzes mischarged Thr-tRNA(Val) in a tRNA-dependent manner. The sequence is that of Valine--tRNA ligase from Haemophilus influenzae (strain 86-028NP).